A 319-amino-acid chain; its full sequence is ATP-dependent 6-phosphofructokinase (319 aa).

Gly11 is a binding site for ATP. 21 to 25 (RAVVR) is a binding site for ADP. Residues 72-73 (RC) and 102-105 (GDGS) contribute to the ATP site. Asp103 lines the Mg(2+) pocket. Residue 125 to 127 (TID) participates in substrate binding. Catalysis depends on Asp127, which acts as the Proton acceptor. An ADP-binding site is contributed by Arg154. Substrate is bound by residues Arg162 and 169–171 (MGR). ADP-binding positions include 185–187 (GAE), Arg211, and 213–215 (KKH). Residues Glu222, Arg243, and 249–252 (HVQR) each bind substrate.

This sequence belongs to the phosphofructokinase type A (PFKA) family. ATP-dependent PFK group I subfamily. Prokaryotic clade 'B1' sub-subfamily. Homotetramer. Mg(2+) serves as cofactor.

It localises to the cytoplasm. It carries out the reaction beta-D-fructose 6-phosphate + ATP = beta-D-fructose 1,6-bisphosphate + ADP + H(+). It functions in the pathway carbohydrate degradation; glycolysis; D-glyceraldehyde 3-phosphate and glycerone phosphate from D-glucose: step 3/4. Allosterically activated by ADP and other diphosphonucleosides, and allosterically inhibited by phosphoenolpyruvate. In terms of biological role, catalyzes the phosphorylation of D-fructose 6-phosphate to fructose 1,6-bisphosphate by ATP, the first committing step of glycolysis. The polypeptide is ATP-dependent 6-phosphofructokinase (Bacillus cereus (strain ATCC 14579 / DSM 31 / CCUG 7414 / JCM 2152 / NBRC 15305 / NCIMB 9373 / NCTC 2599 / NRRL B-3711)).